The sequence spans 413 residues: 1-deoxy-D-xylulose 5-phosphate reductoisomerase (413 aa).

Residues T13, G14, S15, I16, R40, N41, and N127 each coordinate NADPH. Position 128 (K128) interacts with 1-deoxy-D-xylulose 5-phosphate. E129 is a binding site for NADPH. D153 serves as a coordination point for Mn(2+). 4 residues coordinate 1-deoxy-D-xylulose 5-phosphate: S154, E155, S184, and H207. E155 contacts Mn(2+). G213 serves as a coordination point for NADPH. 1-deoxy-D-xylulose 5-phosphate is bound by residues S220, N225, K226, and E229. Position 229 (E229) interacts with Mn(2+).

Belongs to the DXR family. Requires Mg(2+) as cofactor. It depends on Mn(2+) as a cofactor.

It catalyses the reaction 2-C-methyl-D-erythritol 4-phosphate + NADP(+) = 1-deoxy-D-xylulose 5-phosphate + NADPH + H(+). Its pathway is isoprenoid biosynthesis; isopentenyl diphosphate biosynthesis via DXP pathway; isopentenyl diphosphate from 1-deoxy-D-xylulose 5-phosphate: step 1/6. Its function is as follows. Catalyzes the NADPH-dependent rearrangement and reduction of 1-deoxy-D-xylulose-5-phosphate (DXP) to 2-C-methyl-D-erythritol 4-phosphate (MEP). In Nitrosomonas europaea (strain ATCC 19718 / CIP 103999 / KCTC 2705 / NBRC 14298), this protein is 1-deoxy-D-xylulose 5-phosphate reductoisomerase.